Consider the following 1160-residue polypeptide: Carbamoyl phosphate synthase arginine-specific large chain, mitochondrial (1160 aa).

The carboxyphosphate synthetic domain stretch occupies residues 81–478 (AEHEKVKKVV…SLQKALRQVD (398 aa)). ATP contacts are provided by R208, R248, G254, G255, K285, L287, E292, G318, I319, H320, Q361, and E375. An ATP-grasp 1 domain is found at 212-404 (AKALNEINIP…LAYTAAKIAL (193 aa)). Positions 361, 375, and 377 each coordinate Mg(2+). Mn(2+) contacts are provided by Q361, E375, and N377. Residues 479–623 (PSFLGFMAMP…YTSYNASSHD (145 aa)) form an oligomerization domain region. A carbamoyl phosphate synthetic domain region spans residues 624–1012 (IDFNEHGTMV…AYWAALQSTQ (389 aa)). An ATP-grasp 2 domain is found at 748–946 (SQILDKIGVD…FIDVATRSII (199 aa)). R784, K823, I825, E830, G855, V856, H857, S858, Q898, and E917 together coordinate ATP. The Mg(2+) site is built by Q898, E917, and N919. Residues Q898, E917, and N919 each contribute to the Mn(2+) site. The interval 1013–1144 (NFKIPLPGQG…PSVLSEKKEM (132 aa)) is allosteric domain. The region spanning 1014-1160 (FKIPLPGQGI…WSEWIGSHDL (147 aa)) is the MGS-like domain.

The protein belongs to the CarB family. In terms of assembly, heterodimer composed of 2 chains; the small (or glutamine) chain promotes the hydrolysis of glutamine to ammonia, which is used by the large (or ammonia) chain to synthesize carbamoyl phosphate. Mg(2+) is required as a cofactor. Requires Mn(2+) as cofactor.

Its subcellular location is the mitochondrion. It catalyses the reaction hydrogencarbonate + L-glutamine + 2 ATP + H2O = carbamoyl phosphate + L-glutamate + 2 ADP + phosphate + 2 H(+). It carries out the reaction hydrogencarbonate + NH4(+) + 2 ATP = carbamoyl phosphate + 2 ADP + phosphate + 2 H(+). Its pathway is amino-acid biosynthesis; L-arginine biosynthesis; carbamoyl phosphate from bicarbonate: step 1/1. Large subunit of the arginine-specific carbamoyl phosphate synthase (CPSase). CPSase catalyzes the formation of carbamoyl phosphate from the ammonia moiety of glutamine, hydrogencarbonate, and phosphate donated by ATP, the first step of the arginine biosynthetic pathway. The large subunit (synthetase) binds the substrates ammonia (free or transferred from glutamine from the small subunit), hydrogencarbonate and ATP and carries out an ATP-coupled ligase reaction, activating hydrogencarbonate by forming carboxy phosphate which reacts with ammonia to form carbamoyl phosphate. In Schizosaccharomyces pombe (strain 972 / ATCC 24843) (Fission yeast), this protein is Carbamoyl phosphate synthase arginine-specific large chain, mitochondrial (arg4).